The chain runs to 64 residues: MSRERISAQQTETTAAEQEQELTLAASHVVSDVSEVDDLLDEIDGLLAENAEDFVTGFVQKGGE.

The interval 20–58 is ARC ATPase binding; that stretch reads QELTLAASHVVSDVSEVDDLLDEIDGLLAENAEDFVTGF. An Isoglutamyl lysine isopeptide (Glu-Lys) (interchain with K-? in acceptor proteins) cross-link involves residue Glu-64.

It belongs to the prokaryotic ubiquitin-like protein family. In terms of assembly, strongly interacts with the proteasome-associated ATPase ARC through a hydrophobic interface; the interacting region of Pup lies in its C-terminal half. There is one Pup binding site per ARC hexamer ring.

Its pathway is protein degradation; proteasomal Pup-dependent pathway. Protein modifier that is covalently attached to lysine residues of substrate proteins, thereby targeting them for proteasomal degradation. The tagging system is termed pupylation. The protein is Prokaryotic ubiquitin-like protein Pup of Rothia mucilaginosa (strain DY-18) (Stomatococcus mucilaginosus).